The sequence spans 236 residues: NAD-dependent protein deacetylase (236 aa).

Positions 1 to 236 (MIKDWLQESN…EFLRSISNEG (236 aa)) constitute a Deacetylase sirtuin-type domain. Ala18, Thr22, Phe29, Arg30, Gln96, Val98, Asp99, and His114 together coordinate NAD(+). Phe29 contacts nicotinamide. Nicotinamide-binding residues include Val98 and Asp99. His114 (proton acceptor) is an active-site residue. Residues Cys122, Cys125, Cys141, and Cys143 each contribute to the Zn(2+) site. NAD(+)-binding residues include Ser181, Ser182, Asn206, and Ile225.

Belongs to the sirtuin family. Class U subfamily. The cofactor is Zn(2+).

It is found in the cytoplasm. It catalyses the reaction N(6)-acetyl-L-lysyl-[protein] + NAD(+) + H2O = 2''-O-acetyl-ADP-D-ribose + nicotinamide + L-lysyl-[protein]. In terms of biological role, NAD-dependent protein deacetylase which modulates the activities of several enzymes which are inactive in their acetylated form. The sequence is that of NAD-dependent protein deacetylase from Oceanobacillus iheyensis (strain DSM 14371 / CIP 107618 / JCM 11309 / KCTC 3954 / HTE831).